The following is a 423-amino-acid chain: Protein phosphatase 2C 77 (423 aa).

A disordered region spans residues 74–95 (GDEINGSDEFDPRSMNQSEKKV). The 300-residue stretch at 112–411 (LYGVTSICGR…DNISVVVVDL (300 aa)) folds into the PPM-type phosphatase domain. Residues Asp165, Asp251, and Ser252 each contribute to the Mg(2+) site. Cys257 and Cys331 are joined by a disulfide. Mg(2+)-binding residues include Asp337 and Asp402.

It belongs to the PP2C family. Interacts with SPK1, CIPK15/PKS3, GPX3, SCAR1, SCAR2, SCAR3 and SCARL. Also interacts with CIPK24/SOS2. Binds to the fibrillin precursor protein. Interacts with ABA-bounded PYR1, PYL1, PYL2, PYL3, PYL4, PYL5, PYL6, PYL8 and PYL9, and with free PYL2, PYL3 and PYL4. Interacts with and represses GHR1, and, to a lesser extent, SRK2E/OST1. Mg(2+) is required as a cofactor. Mn(2+) serves as cofactor.

It carries out the reaction O-phospho-L-seryl-[protein] + H2O = L-seryl-[protein] + phosphate. The catalysed reaction is O-phospho-L-threonyl-[protein] + H2O = L-threonyl-[protein] + phosphate. Phosphatase activity repressed by oxidized ATGPX3, free fatty acids (e.g. arachidonic acid (20:4) and Linolenic acid (18:3)) and by H(2)O(2). Repressed by PYR/PYL/RCAR ABA receptors in an ABA-dependent manner. Repressor of the abscisic acid (ABA) signaling pathway that regulates numerous ABA responses, such as stomatal closure, osmotic water permeability of the plasma membrane (Pos), high light stress, response to glucose, seed germination and inhibition of vegetative growth. During the stomatal closure regulation, modulates the inward calcium-channel permeability as well as H(2)O(2) and oxidative burst in response to ABA and dehydration. Represses GHR1 and, to some extent, SRK2E/OST1, kinases involved in the regulation of SLAC1-dependent stomatal closure. Controls negatively fibrillin that is involved in mediating ABA-induced photoprotection. May be implicated in ABA content regulation. Involved in acquired thermotolerance of root growth and seedling survival. Required for the Erwinia amylovora harpin-induced (HrpN) drought tolerance. Involved in the hydrotropic response. The sequence is that of Protein phosphatase 2C 77 from Arabidopsis thaliana (Mouse-ear cress).